Reading from the N-terminus, the 675-residue chain is 1,4-alpha-glucan branching enzyme TK1436 (675 aa).

Residue Glu-183 is the Nucleophile of the active site. Residues Arg-261 and Gly-278 each coordinate substrate. The active-site Proton donor is the Asp-354. Positions 407, 467, and 476 each coordinate substrate. Disordered regions lie at residues 537-563 (PELE…KVLT) and 581-627 (EETR…LSIK). 2 stretches are compositionally biased toward basic and acidic residues: residues 549–563 (PPEK…KVLT) and 581–595 (EETR…EASK). Residues 596–616 (RGKRKSSKSKRLPRKVSKKAP) are compositionally biased toward basic residues.

Belongs to the glycosyl hydrolase 57 family. In terms of assembly, monomer.

It catalyses the reaction Transfers a segment of a (1-&gt;4)-alpha-D-glucan chain to a primary hydroxy group in a similar glucan chain.. Its function is as follows. Catalyzes the formation of branch points in alpha-glucans by cleavage of an alpha-1,4 glycosidic bond and subsequent transfer of the cleaved-off oligosaccharide to a new alpha-1,6 position. The branch chain-length distribution of the reaction products shows degree of polymerization (DP) of 5 to 30, with two local maxima at DP 6 and DP 11. Exhibits an alpha-retaining catalytic mechanism. Does not display alpha-galactosidase or pullulanase activity, since melibiose and pullulan are not substrates. Is not able to catalyze the hydrolysis or transglycosylation of maltoheptaose, suggesting that the TK1436 protein contains neither alpha-amylase nor 4-alpha-glucanotransferase activity. This Thermococcus kodakarensis (strain ATCC BAA-918 / JCM 12380 / KOD1) (Pyrococcus kodakaraensis (strain KOD1)) protein is 1,4-alpha-glucan branching enzyme TK1436.